Reading from the N-terminus, the 556-residue chain is 2-succinyl-5-enolpyruvyl-6-hydroxy-3-cyclohexene-1-carboxylate synthase (556 aa).

Belongs to the TPP enzyme family. MenD subfamily. Homodimer. It depends on Mg(2+) as a cofactor. Requires Mn(2+) as cofactor. Thiamine diphosphate is required as a cofactor.

It carries out the reaction isochorismate + 2-oxoglutarate + H(+) = 5-enolpyruvoyl-6-hydroxy-2-succinyl-cyclohex-3-ene-1-carboxylate + CO2. Its pathway is quinol/quinone metabolism; 1,4-dihydroxy-2-naphthoate biosynthesis; 1,4-dihydroxy-2-naphthoate from chorismate: step 2/7. It functions in the pathway quinol/quinone metabolism; menaquinone biosynthesis. Its function is as follows. Catalyzes the thiamine diphosphate-dependent decarboxylation of 2-oxoglutarate and the subsequent addition of the resulting succinic semialdehyde-thiamine pyrophosphate anion to isochorismate to yield 2-succinyl-5-enolpyruvyl-6-hydroxy-3-cyclohexene-1-carboxylate (SEPHCHC). The polypeptide is 2-succinyl-5-enolpyruvyl-6-hydroxy-3-cyclohexene-1-carboxylate synthase (Salmonella dublin (strain CT_02021853)).